Consider the following 75-residue polypeptide: MARYFRRRKFCRFTAEGVQEIDYKDIAVLKNYITESGKIVPSRITGTRAKYQRQLSRAIKRARYLALLPYTDQHR.

It belongs to the bacterial ribosomal protein bS18 family. In terms of assembly, part of the 30S ribosomal subunit. Forms a tight heterodimer with protein bS6.

Functionally, binds as a heterodimer with protein bS6 to the central domain of the 16S rRNA, where it helps stabilize the platform of the 30S subunit. The sequence is that of Small ribosomal subunit protein bS18 from Buchnera aphidicola subsp. Acyrthosiphon pisum (strain 5A).